A 77-amino-acid polypeptide reads, in one-letter code: U8-lycotoxin-Ls1p (77 aa).

A signal peptide spans 1–20; that stretch reads MKLMIFTGLVLFAIVSLIEA. Residues 21-26 constitute a propeptide that is removed on maturation; the sequence is QAENEK.

It belongs to the neurotoxin 19 (CSTX) family. 08 (U8-Lctx) subfamily. Post-translationally, contains 4 disulfide bonds. As to expression, expressed by the venom gland.

It is found in the secreted. In Lycosa singoriensis (Wolf spider), this protein is U8-lycotoxin-Ls1p.